Reading from the N-terminus, the 502-residue chain is Glycerol kinase (502 aa).

Thr15 serves as a coordination point for ADP. Positions 15, 16, and 17 each coordinate ATP. Thr15 provides a ligand contact to sn-glycerol 3-phosphate. Arg19 contacts ADP. Residues Arg85, Glu86, and Tyr137 each contribute to the sn-glycerol 3-phosphate site. Glycerol is bound by residues Arg85, Glu86, and Tyr137. Residue His233 is modified to Phosphohistidine; by HPr. Asp247 is a sn-glycerol 3-phosphate binding site. Residues Asp247 and Gln248 each coordinate glycerol. Positions 269 and 312 each coordinate ADP. The ATP site is built by Thr269, Gly312, Gln316, and Gly413. Residues Gly413 and Asn417 each coordinate ADP.

It belongs to the FGGY kinase family. As to quaternary structure, homotetramer and homodimer (in equilibrium). Post-translationally, the phosphoenolpyruvate-dependent sugar phosphotransferase system (PTS), including enzyme I, and histidine-containing protein (HPr) are required for the phosphorylation, which leads to the activation of the enzyme.

It catalyses the reaction glycerol + ATP = sn-glycerol 3-phosphate + ADP + H(+). Its pathway is polyol metabolism; glycerol degradation via glycerol kinase pathway; sn-glycerol 3-phosphate from glycerol: step 1/1. Its activity is regulated as follows. Activated by phosphorylation and inhibited by fructose 1,6-bisphosphate (FBP). In terms of biological role, key enzyme in the regulation of glycerol uptake and metabolism. Catalyzes the phosphorylation of glycerol to yield sn-glycerol 3-phosphate. In Streptococcus agalactiae serotype Ia (strain ATCC 27591 / A909 / CDC SS700), this protein is Glycerol kinase.